The sequence spans 88 residues: Antitoxin VapB21 (88 aa).

In terms of biological role, antitoxin component of a type II toxin-antitoxin (TA) system. In Mycobacterium tuberculosis (strain CDC 1551 / Oshkosh), this protein is Antitoxin VapB21 (vapB21).